We begin with the raw amino-acid sequence, 1798 residues long: U3 small nucleolar RNA-associated protein 10 (1798 aa).

An HEAT 1 repeat occupies 583–620 (LDFQALLPFLLVTLTDPSERVRREAAAALAAVGSLYKK). The next 2 membrane-spanning stretches (helical) occupy residues 942 to 962 (IQSG…AIVN) and 998 to 1018 (ALLL…HSVM). HEAT repeat units follow at residues 1042–1079 (QTID…AFEH), 1249–1286 (LTLV…QNPE), 1293–1331 (IRVL…KYGK), and 1754–1791 (ALLP…VLGE).

The protein belongs to the HEATR1/UTP10 family. In terms of assembly, component of the ribosomal small subunit (SSU) processome.

Its subcellular location is the nucleus. The protein resides in the nucleolus. It is found in the membrane. In terms of biological role, involved in nucleolar processing of pre-18S ribosomal RNA. Involved in ribosome biosynthesis. The sequence is that of U3 small nucleolar RNA-associated protein 10 from Aspergillus fumigatus (strain ATCC MYA-4609 / CBS 101355 / FGSC A1100 / Af293) (Neosartorya fumigata).